Consider the following 156-residue polypeptide: Small ribosomal subunit protein uS7 (156 aa).

It belongs to the universal ribosomal protein uS7 family. As to quaternary structure, part of the 30S ribosomal subunit. Contacts proteins S9 and S11.

One of the primary rRNA binding proteins, it binds directly to 16S rRNA where it nucleates assembly of the head domain of the 30S subunit. Is located at the subunit interface close to the decoding center, probably blocks exit of the E-site tRNA. This chain is Small ribosomal subunit protein uS7, found in Synechococcus sp. (strain WH7803).